A 3412-amino-acid chain; its full sequence is Genome polyprotein (3412 aa).

Residues 2–15 (SKKPGKPGRNRVVN) are interaction with host EXOC1. The Cytoplasmic segment spans residues 2–108 (SKKPGKPGRN…PSKKRGGTRS (107 aa)). Residues 37 to 72 (LLDGRGPVRFILAILTFFRFTALQPTEALKRRWRAV) are hydrophobic; homodimerization of capsid protein C. Residues 104-121 (GGTRSLLGLAALIGLASS) constitute a propeptide, ER anchor for the capsid protein C, removed in mature form by serine protease NS3. Residues 109–129 (LLGLAALIGLASSLQLSTYQG) form a helical membrane-spanning segment. Over 130-247 (KVLMSINKTD…TTKYLTKVEN (118 aa)) the chain is Extracellular. N-linked (GlcNAc...) asparagine; by host glycosylation is present at asparagine 136. A helical membrane pass occupies residues 248 to 268 (WVLRNPGYALVALAIGWMLGS). Topologically, residues 269–273 (NNTQR) are cytoplasmic. The helical transmembrane segment at 274 to 288 (VVFVIMLMLIAPAYS) threads the bilayer. The Extracellular segment spans residues 289-741 (FNCLGTSNRD…QVFGGAFRTL (453 aa)). Intrachain disulfides connect cysteine 291–cysteine 318, cysteine 348–cysteine 404, cysteine 348–cysteine 409, cysteine 362–cysteine 393, cysteine 380–cysteine 404, cysteine 380–cysteine 409, cysteine 478–cysteine 576, and cysteine 593–cysteine 624. The interval 386 to 399 (DRGWGNGCGLFGKG) is fusion peptide. Residues 742–762 (FGGMSWITQGLLGALLLWMGL) traverse the membrane as a helical segment. The Cytoplasmic segment spans residues 763 to 768 (QARDRS). The helical transmembrane segment at 769–789 (ISLTLLAVGGILIFLATSVQA) threads the bilayer. Topologically, residues 790–1214 (DSGCAIDLQR…AFAEMNTGGD (425 aa)) are extracellular. Cystine bridges form between cysteine 793-cysteine 804 and cysteine 844-cysteine 932. Residues asparagine 919, asparagine 964, and asparagine 996 are each glycosylated (N-linked (GlcNAc...) asparagine; by host). Disulfide bonds link cysteine 968/cysteine 1012, cysteine 1069/cysteine 1118, cysteine 1080/cysteine 1101, cysteine 1080/cysteine 1102, cysteine 1101/cysteine 1105, and cysteine 1102/cysteine 1105. Residues 1215–1235 (VIHLALVAVFKVQPAFLAGLF) traverse the membrane as a helical segment. The Cytoplasmic segment spans residues 1236 to 1245 (LRMQWSNQEN). A helical transmembrane segment spans residues 1246 to 1266 (ILMVIGAAFLQMAANDLKLEV). At 1267-1288 (LPILNAMSIAWMLIRAMKEGKV) the chain is on the lumenal side. The chain crosses the membrane as a helical span at residues 1289–1303 (AMYALPILCALTPGM). Arginine 1304 is a topological domain (cytoplasmic). The helical transmembrane segment at 1305–1325 (MAGLDVIRCLLLIIGIVTLLN) threads the bilayer. Topologically, residues 1326–1339 (ERRESVAKKKGGYL) are lumenal. A helical transmembrane segment spans residues 1340 to 1360 (LAAALCQAGVCSPLIMMGGLI). Residues 1361–1369 (LAHPNGKRS) are Cytoplasmic-facing. Residues 1370–1390 (WPASEVLTGVGLMCALAGGLL) form a helical membrane-spanning segment. At 1391 to 1393 (EFE) the chain is on the lumenal side. The chain crosses the membrane as a helical span at residues 1394–1414 (ETSMVVPFAIAGLMYITYTVS). At 1415–1471 (GKAAEMWIEKAADITWEQNAEITGTSPRLDVDLDSHGNFKLLNDPGAPVHLFALRFI) the chain is on the cytoplasmic side. Residues 1422–1461 (IEKAADITWEQNAEITGTSPRLDVDLDSHGNFKLLNDPGA) are interacts with and activates NS3 protease. Residues 1472 to 1492 (LLGLSARFHWFIPFGVLGFWL) constitute an intramembrane region (helical). Topologically, residues 1493-2167 (LGKHSKRGGA…KEALAELPDS (675 aa)) are cytoplasmic. The Peptidase S7 domain maps to 1500–1677 (GGALWDVPSP…ERTEEPIPDA (178 aa)). Active-site charge relay system; for serine protease NS3 activity residues include histidine 1550, aspartate 1574, and serine 1634. Residues 1680–1836 (EEMLRKRKLT…DSNSPILDVE (157 aa)) form the Helicase ATP-binding domain. The important for RNA-binding stretch occupies residues 1684 to 1687 (RKRK). 1693 to 1700 (LHPGAGKT) contributes to the ATP binding site. A DEAH box motif is present at residues 1784–1787 (DEAH). One can recognise a Helicase C-terminal domain in the interval 1847–2011 (GYEWITNFTG…GLVAQMYQPE (165 aa)). The segment at 2162-2166 (AELPD) is regulates the ATPase activity of NS3 helicase. Residues 2168 to 2188 (LETLLLIGMLCVMSMGTFIFL) form a helical membrane-spanning segment. The Lumenal segment spans residues 2189–2193 (MNRKG). Residues 2194 to 2214 (VGKMGLGAFVMTLATALLWAA) constitute an intramembrane region (helical). Residue glutamate 2215 is a topological domain, lumenal. A helical transmembrane segment spans residues 2216 to 2236 (VPGTQIAGVLLIVFLLMIVLI). Over 2237–2251 (PEPEKQRSQTDNQLA) the chain is Cytoplasmic. The helical transmembrane segment at 2252 to 2266 (VFLICIMTLMGVVAA) threads the bilayer. Residues 2267 to 2308 (NEMGLLEKTKSDIAKLFGSQPGSVGFATRTTPWDISLDIKPA) lie on the Lumenal side of the membrane. The helical intramembrane region spans 2309–2329 (TAWALYAAATMVMTPLIKHLI). Residues 2330–2376 (TTQYVNFSLTAIASQAGVLLGLTNGMPFTAMDLSVPLLVLGCWNQMT) are Lumenal-facing. The chain crosses the membrane as a helical span at residues 2377–2397 (LPSLAVAVMLLAIHYAFMIPG). At 2398 to 2440 (WQAEAMRAAQRRTAAGIMKNAVVDGIVATDIPDLSPATPMTEK) the chain is on the cytoplasmic side. Residues 2441–2461 (KMGQILLIAAAVLAVLVRPGI) traverse the membrane as a helical segment. Residues 2462-2466 (CSIKE) are Lumenal-facing. The chain crosses the membrane as a helical span at residues 2467–2487 (FGVLGSAALVTLIEGTAGVVW). At 2488–3412 (NCTTAVGLCN…IGEEEYRDYM (925 aa)) the chain is on the cytoplasmic side. Positions 2525 to 2790 (GGGKGATLGE…DVNLGSGTRS (266 aa)) constitute an mRNA cap 0-1 NS5-type MT domain. Serine 2580 is an S-adenosyl-L-methionine binding site. Serine 2580 is subject to Phosphoserine. Lysine 2585 acts as the For 2'-O-MTase activity in catalysis. 6 residues coordinate S-adenosyl-L-methionine: glycine 2610, tryptophan 2611, threonine 2628, lysine 2629, aspartate 2655, and valine 2656. The active-site For 2'-O-MTase activity is the aspartate 2670. Residue isoleucine 2671 coordinates S-adenosyl-L-methionine. Catalysis depends on for 2'-O-MTase activity residues lysine 2706 and glutamate 2742. Tyrosine 2744 contacts S-adenosyl-L-methionine. Basic and acidic residues predominate over residues 2771 to 2780 (QNRSGPRYEE). Residues 2771–2791 (QNRSGPRYEEDVNLGSGTRSV) are disordered. Residues glutamate 2964, histidine 2968, cysteine 2973, and cysteine 2976 each coordinate Zn(2+). Positions 3054–3206 (GKMYADDTAG…KPIDDRFATA (153 aa)) constitute a RdRp catalytic domain. Residues histidine 3241, cysteine 3257, and cysteine 3376 each coordinate Zn(2+).

It in the N-terminal section; belongs to the class I-like SAM-binding methyltransferase superfamily. mRNA cap 0-1 NS5-type methyltransferase family. Homodimer. Interacts (via N-terminus) with host EXOC1 (via C-terminus); this interaction results in EXOC1 degradation through the proteasome degradation pathway. In terms of assembly, forms heterodimers with envelope protein E in the endoplasmic reticulum and Golgi. As to quaternary structure, homodimer; in the endoplasmic reticulum and Golgi. Interacts with protein prM. Interacts with non-structural protein 1. Homodimer; Homohexamer when secreted. Interacts with envelope protein E. NS1 interacts with NS4B. Interacts with host complement protein CFH; this interaction leads to the degradation of C3. In terms of assembly, interacts (via N-terminus) with serine protease NS3. As to quaternary structure, forms a heterodimer with serine protease NS3. May form homooligomers. Forms a heterodimer with NS2B. Interacts with non-structural protein 2A (via N-terminus). Interacts with NS4B. Interacts with unphosphorylated RNA-directed RNA polymerase NS5; this interaction stimulates RNA-directed RNA polymerase NS5 guanylyltransferase activity. In terms of assembly, interacts with serine protease NS3. As to quaternary structure, homodimer. Interacts with host STAT2; this interaction inhibits the phosphorylation of the latter, and, when all viral proteins are present (polyprotein), targets STAT2 for degradation. Interacts with serine protease NS3. Specific enzymatic cleavages in vivo yield mature proteins. Cleavages in the lumen of endoplasmic reticulum are performed by host signal peptidase, whereas cleavages in the cytoplasmic side are performed by serine protease NS3. Signal cleavage at the 2K-4B site requires a prior NS3 protease-mediated cleavage at the 4A-2K site. In terms of processing, cleaved in post-Golgi vesicles by a host furin, releasing the mature small envelope protein M, and peptide pr. This cleavage is incomplete as up to 30% of viral particles still carry uncleaved prM. Post-translationally, N-glycosylated. N-glycosylated. The excreted form is glycosylated and this is required for efficient secretion of the protein from infected cells. In terms of processing, phosphorylated on serines residues. This phosphorylation may trigger NS5 nuclear localization.

It localises to the virion. Its subcellular location is the host nucleus. It is found in the host cytoplasm. The protein localises to the host perinuclear region. The protein resides in the secreted. It localises to the virion membrane. Its subcellular location is the host endoplasmic reticulum membrane. It catalyses the reaction Selective hydrolysis of -Xaa-Xaa-|-Yaa- bonds in which each of the Xaa can be either Arg or Lys and Yaa can be either Ser or Ala.. The enzyme catalyses RNA(n) + a ribonucleoside 5'-triphosphate = RNA(n+1) + diphosphate. The catalysed reaction is a ribonucleoside 5'-triphosphate + H2O = a ribonucleoside 5'-diphosphate + phosphate + H(+). It carries out the reaction ATP + H2O = ADP + phosphate + H(+). It catalyses the reaction a 5'-end (5'-triphosphoguanosine)-ribonucleoside in mRNA + S-adenosyl-L-methionine = a 5'-end (N(7)-methyl 5'-triphosphoguanosine)-ribonucleoside in mRNA + S-adenosyl-L-homocysteine. The enzyme catalyses a 5'-end (N(7)-methyl 5'-triphosphoguanosine)-ribonucleoside in mRNA + S-adenosyl-L-methionine = a 5'-end (N(7)-methyl 5'-triphosphoguanosine)-(2'-O-methyl-ribonucleoside) in mRNA + S-adenosyl-L-homocysteine + H(+). Plays a role in virus budding by binding to the cell membrane and gathering the viral RNA into a nucleocapsid that forms the core of a mature virus particle. During virus entry, may induce genome penetration into the host cytoplasm after hemifusion induced by the surface proteins. Can migrate to the cell nucleus where it modulates host functions. Overcomes the anti-viral effects of host EXOC1 by sequestering and degrading the latter through the proteasome degradation pathway. Functionally, inhibits RNA silencing by interfering with host Dicer. Its function is as follows. Prevents premature fusion activity of envelope proteins in trans-Golgi by binding to envelope protein E at pH6.0. After virion release in extracellular space, gets dissociated from E dimers. In terms of biological role, acts as a chaperone for envelope protein E during intracellular virion assembly by masking and inactivating envelope protein E fusion peptide. prM is the only viral peptide matured by host furin in the trans-Golgi network probably to avoid catastrophic activation of the viral fusion activity in acidic Golgi compartment prior to virion release. prM-E cleavage is inefficient, and many virions are only partially matured. These uncleaved prM would play a role in immune evasion. May play a role in virus budding. Exerts cytotoxic effects by activating a mitochondrial apoptotic pathway through M ectodomain. May display a viroporin activity. Functionally, binds to host cell surface receptor and mediates fusion between viral and cellular membranes. Envelope protein is synthesized in the endoplasmic reticulum in the form of heterodimer with protein prM. They play a role in virion budding in the ER, and the newly formed immature particle is covered with 60 spikes composed of heterodimer between precursor prM and envelope protein E. The virion is transported to the Golgi apparatus where the low pH causes dissociation of PrM-E heterodimers and formation of E homodimers. prM-E cleavage is inefficient, and many virions are only partially matured. These uncleaved prM would play a role in immune evasion. Its function is as follows. Involved in immune evasion, pathogenesis and viral replication. Once cleaved off the polyprotein, is targeted to three destinations: the viral replication cycle, the plasma membrane and the extracellular compartment. Essential for viral replication. Required for formation of the replication complex and recruitment of other non-structural proteins to the ER-derived membrane structures. Excreted as a hexameric lipoparticle that plays a role against host immune response. Antagonizing the complement function. Binds to the host macrophages and dendritic cells. Inhibits signal transduction originating from Toll-like receptor 3 (TLR3). In terms of biological role, component of the viral RNA replication complex that functions in virion assembly and antagonizes the host alpha/beta interferon antiviral response. Required cofactor for the serine protease function of NS3. May have membrane-destabilizing activity and form viroporins. Functionally, displays three enzymatic activities: serine protease, NTPase and RNA helicase. NS3 serine protease, in association with NS2B, performs its autocleavage and cleaves the polyprotein at dibasic sites in the cytoplasm: C-prM, NS2A-NS2B, NS2B-NS3, NS3-NS4A, NS4A-2K and NS4B-NS5. NS3 RNA helicase binds RNA and unwinds dsRNA in the 3' to 5' direction. Its function is as follows. Regulates the ATPase activity of the NS3 helicase activity. NS4A allows NS3 helicase to conserve energy during unwinding. In terms of biological role, functions as a signal peptide for NS4B and is required for the interferon antagonism activity of the latter. Induces the formation of ER-derived membrane vesicles where the viral replication takes place. Inhibits interferon (IFN)-induced host STAT1 phosphorylation and nuclear translocation, thereby preventing the establishment of cellular antiviral state by blocking the IFN-alpha/beta pathway. Inhibits STAT2 translocation in the nucleus after IFN-alpha treatment. Functionally, replicates the viral (+) and (-) RNA genome, and performs the capping of genomes in the cytoplasm. NS5 methylates viral RNA cap at guanine N-7 and ribose 2'-O positions. Besides its role in RNA genome replication, also prevents the establishment of cellular antiviral state by blocking the interferon-alpha/beta (IFN-alpha/beta) signaling pathway. Inhibits host TYK2 and STAT2 phosphorylation, thereby preventing activation of JAK-STAT signaling pathway. The polypeptide is Genome polyprotein (Agelaius tricolor (Tricolored blackbird)).